The sequence spans 224 residues: Probable C-&gt;U-editing enzyme APOBEC-2 (224 aa).

Residues 1–25 (MAQKEEAAAAAEPASQNGEEVENLE) form a disordered region. The Zn(2+) site is built by E60 and H98. The CMP/dCMP-type deaminase domain occupies 64-169 (GRNKTFLCYV…PEIQAALRKL (106 aa)). E100 (proton donor) is an active-site residue. Zn(2+) is bound by residues C128 and C131.

It belongs to the cytidine and deoxycytidylate deaminase family. Homotetramer. Requires Zn(2+) as cofactor.

The catalysed reaction is cytidine(6666) in apoB mRNA + H2O + H(+) = uridine(6666) in apoB mRNA + NH4(+). In terms of biological role, probable C to U editing enzyme whose physiological substrate is not yet known. Does not display detectable apoB mRNA editing. Has a low intrinsic cytidine deaminase activity. May play a role in the epigenetic regulation of gene expression through the process of active DNA demethylation. The chain is Probable C-&gt;U-editing enzyme APOBEC-2 (APOBEC2) from Bos taurus (Bovine).